The chain runs to 356 residues: 3-isopropylmalate dehydrogenase (356 aa).

Substrate is bound by residues arginine 95, arginine 105, arginine 133, and aspartate 223. Residues aspartate 223, aspartate 247, and aspartate 251 each coordinate Mg(2+). 281-293 (GSAPDIAGQNKAN) contributes to the NAD(+) binding site.

This sequence belongs to the isocitrate and isopropylmalate dehydrogenases family. LeuB type 1 subfamily. As to quaternary structure, homodimer. The cofactor is Mg(2+). Requires Mn(2+) as cofactor.

The protein localises to the cytoplasm. The catalysed reaction is (2R,3S)-3-isopropylmalate + NAD(+) = 4-methyl-2-oxopentanoate + CO2 + NADH. The protein operates within amino-acid biosynthesis; L-leucine biosynthesis; L-leucine from 3-methyl-2-oxobutanoate: step 3/4. Its function is as follows. Catalyzes the oxidation of 3-carboxy-2-hydroxy-4-methylpentanoate (3-isopropylmalate) to 3-carboxy-4-methyl-2-oxopentanoate. The product decarboxylates to 4-methyl-2 oxopentanoate. The polypeptide is 3-isopropylmalate dehydrogenase (Neisseria meningitidis serogroup A / serotype 4A (strain DSM 15465 / Z2491)).